A 313-amino-acid polypeptide reads, in one-letter code: Non-structural protein 3 (313 aa).

Residues 1–149 are RNA-binding; that stretch reads MLKMESTQQM…TRLMKDKLER (149 aa). The dimerization stretch occupies residues 150–206; it reads GEVEVDDSFVEEKMEVDTIDWKSRYEQLEKRFESLKHRVNEKYNHWVLKARKVNENM. The stretch at 166–237 forms a coiled coil; that stretch reads DTIDWKSRYE…NKLERDLQSK (72 aa). Residues 170 to 234 are interaction with host ZC3H7B; it reads WKSRYEQLEK…MYNNKLERDL (65 aa). The segment at 208-313 is interaction with host EIF4G1; that stretch reads SLQNVISQQQ…QQCNYTYTYE (106 aa).

The protein belongs to the rotavirus NSP3 family. Homodimer. Interacts (via the coiled-coil region) with host ZC3H7B (via LD motif). Interacts with host EIF4G1.

The protein resides in the host cytoplasm. Its function is as follows. Plays an important role in stimulating the translation of viral mRNAs. These mRNAs are capped but not polyadenylated, instead terminating in a conserved sequence 'GACC' at the 3' that is recognized by NSP3, which competes with host PABPC1 for EIF4G1 binding. The interaction between NSP3 and host EIF4G1 stabilizes the EIF4E-EIF4G1 interaction, thereby facilitating the initiation of capped mRNA translation. The polypeptide is Non-structural protein 3 (Rotavirus A (strain RVA/Monkey/United States/RRV/1975/G3P5B[3]) (RV-A)).